The primary structure comprises 213 residues: Eukaryotic translation initiation factor 4E (213 aa).

2 positions are modified to phosphoserine; by CK2: Ser-2 and Ser-15. At Thr-22 the chain carries Phosphothreonine. Phosphoserine is present on residues Ser-28 and Ser-30. Lys-114 participates in a covalent cross-link: Glycyl lysine isopeptide (Lys-Gly) (interchain with G-Cter in ubiquitin).

The protein belongs to the eukaryotic initiation factor 4E family. As to quaternary structure, component of the eIF4F complex, which composition varies with external and internal environmental conditions. It is composed of at least eIF4A (TIF1/TIF2), eIF4E (TIF45) and eIF4G (TIF4631 or TIF4632). Interacts with PAT1 in a RNA-dependent manner. eIF4E is also known to interact with other partners.

Its subcellular location is the cytoplasm. It localises to the nucleus. Its function is as follows. Recognizes and binds the 7-methylguanosine (m7G)-containing mRNA cap during an early step in the initiation of protein synthesis and facilitates ribosome binding by inducing the unwinding of the mRNAs secondary structures. In Saccharomyces cerevisiae (strain ATCC 204508 / S288c) (Baker's yeast), this protein is Eukaryotic translation initiation factor 4E (CDC33).